The primary structure comprises 328 residues: Probable cell division protein WhiA (328 aa).

Positions 275-308 form a DNA-binding region, H-T-H motif; that stretch reads SLEELGQLHDPVLTKDAIAGRIRRLLAMADKRAE.

The protein belongs to the WhiA family.

In terms of biological role, involved in cell division and chromosome segregation. The protein is Probable cell division protein WhiA of Nocardioides sp. (strain ATCC BAA-499 / JS614).